Here is an 894-residue protein sequence, read N- to C-terminus: B-cell lymphoma/leukemia 11B (894 aa).

A phosphoserine mark is found at S97 and S110. Phosphothreonine is present on T120. At S129 the chain carries Phosphoserine. K137 is covalently cross-linked (Glycyl lysine isopeptide (Lys-Gly) (interchain with G-Cter in SUMO2)). A C2H2-type 1 zinc finger spans residues 221 to 251 (YICTTCKQPFNSAWFLLQHAQNTHGFRIYLE). S256 carries the phosphoserine modification. A Phosphothreonine modification is found at T260. S277 is modified (phosphoserine). The residue at position 293 (R293) is an Omega-N-methylarginine. R322 carries the asymmetric dimethylarginine modification. S358 carries the post-translational modification Phosphoserine. Disordered regions lie at residues 370–428 (LAGN…KSKS) and 471–583 (KRHM…GGGA). Residue T376 is modified to Phosphothreonine. 3 positions are modified to phosphoserine: S381, S398, and S401. The span at 396 to 423 (QPSPKSPFLSTPPLPPMPPGGTPPPQPP) shows a compositional bias: pro residues. Phosphothreonine occurs at positions 406 and 417. 2 C2H2-type zinc fingers span residues 427–454 (KSCE…GEKP) and 455–482 (YKCQ…HKAG). Over residues 471-480 (KRHMKTHMHK) the composition is skewed to basic residues. Residues S483, S488, S496, and S497 each carry the phosphoserine modification. The span at 511–529 (KAADGDFRHHESDPSLGHE) shows a compositional bias: basic and acidic residues. Acidic residues predominate over residues 530–546 (PEEEDEEEEEEEEELLL). Residues 568 to 583 (NGGGGVPGVPGAGGGA) show a composition bias toward gly residues. Residues K591 and K617 each participate in a glycyl lysine isopeptide (Lys-Gly) (interchain with G-Cter in SUMO2) cross-link. Residues 653–680 (GRGGGFAPGTEPFPGLFPRKPAPLPSPG) form a disordered region. A Phosphoserine modification is found at S678. Residues K686 and K723 each participate in a glycyl lysine isopeptide (Lys-Gly) (interchain with G-Cter in SUMO2) cross-link. The span at 737–752 (FATSSEHSSENGSLRF) shows a compositional bias: polar residues. Residues 737–794 (FATSSEHSSENGSLRFSTPPGDLLDGGLSGRSGTASGGSTPHLGGPGPGRPSSKEGRR) are disordered. Residues 753 to 775 (STPPGDLLDGGLSGRSGTASGGS) are compositionally biased toward low complexity. The residue at position 754 (T754) is a Phosphothreonine. Phosphoserine is present on residues S765 and S772. 3 consecutive C2H2-type zinc fingers follow at residues 796–823 (DTCE…GERP), 824–853 (YKCE…GKEV), and 854–884 (YRCD…LLTN). K851 is modified (N6-acetyllysine). A Glycyl lysine isopeptide (Lys-Gly) (interchain with G-Cter in SUMO2) cross-link involves residue K887.

As to quaternary structure, interacts with TFCOUP1, SIRT1, ARP1 and EAR2. Interacts with EP300; the interaction is detected in activated T-lymphocytes, but not under resting conditions. Post-translationally, sumoylated with SUMO1. As to expression, highly expressed in brain and in malignant T-cell lines derived from patients with adult T-cell leukemia/lymphoma.

Its subcellular location is the nucleus. In terms of biological role, key regulator of both differentiation and survival of T-lymphocytes during thymocyte development in mammals. Essential in controlling the responsiveness of hematopoietic stem cells to chemotactic signals by modulating the expression of the receptors CCR7 and CCR9, which direct the movement of progenitor cells from the bone marrow to the thymus. Is a regulator of IL2 promoter and enhances IL2 expression in activated CD4(+) T-lymphocytes. Tumor-suppressor that represses transcription through direct, TFCOUP2-independent binding to a GC-rich response element. May also function in the P53-signaling pathway. The sequence is that of B-cell lymphoma/leukemia 11B (BCL11B) from Homo sapiens (Human).